The sequence spans 89 residues: Putative regulatory protein CYA_2696 (89 aa).

It belongs to the RemA family.

The sequence is that of Putative regulatory protein CYA_2696 from Synechococcus sp. (strain JA-3-3Ab) (Cyanobacteria bacterium Yellowstone A-Prime).